We begin with the raw amino-acid sequence, 72 residues long: Large ribosomal subunit protein bL31c (72 aa).

This sequence belongs to the bacterial ribosomal protein bL31 family. Type A subfamily. Part of the 50S ribosomal subunit.

The protein localises to the plastid. Its subcellular location is the chloroplast. Binds the 23S rRNA. In Guillardia theta (Cryptophyte), this protein is Large ribosomal subunit protein bL31c.